The following is a 352-amino-acid chain: Nicotinate-nucleotide--dimethylbenzimidazole phosphoribosyltransferase (352 aa).

The active-site Proton acceptor is E318.

This sequence belongs to the CobT family.

The catalysed reaction is 5,6-dimethylbenzimidazole + nicotinate beta-D-ribonucleotide = alpha-ribazole 5'-phosphate + nicotinate + H(+). Its pathway is nucleoside biosynthesis; alpha-ribazole biosynthesis; alpha-ribazole from 5,6-dimethylbenzimidazole: step 1/2. Catalyzes the synthesis of alpha-ribazole-5'-phosphate from nicotinate mononucleotide (NAMN) and 5,6-dimethylbenzimidazole (DMB). The protein is Nicotinate-nucleotide--dimethylbenzimidazole phosphoribosyltransferase of Dehalococcoides mccartyi (strain CBDB1).